We begin with the raw amino-acid sequence, 204 residues long: Small ribosomal subunit protein uS4 (204 aa).

Residues 94 to 157 enclose the S4 RNA-binding domain; sequence RRLDNVVYRL…KKLEVFKENL (64 aa).

It belongs to the universal ribosomal protein uS4 family. Part of the 30S ribosomal subunit. Contacts protein S5. The interaction surface between S4 and S5 is involved in control of translational fidelity.

Functionally, one of the primary rRNA binding proteins, it binds directly to 16S rRNA where it nucleates assembly of the body of the 30S subunit. With S5 and S12 plays an important role in translational accuracy. The sequence is that of Small ribosomal subunit protein uS4 from Sulfurihydrogenibium sp. (strain YO3AOP1).